The chain runs to 191 residues: Holliday junction branch migration complex subunit RuvA (191 aa).

The interval 1-64 is domain I; that stretch reads MIGSITGNVE…DNITQLYGFL (64 aa). The segment at 65-142 is domain II; the sequence is NRQEQDYLKM…KMPIEETFSI (78 aa). A flexible linker region spans residues 143–146; that stretch reads IEND. The tract at residues 146-191 is domain III; that stretch reads DDSLAALISLGYEKLKAFNVIQEIKSKTPDASTQEVIRKALQKLSQ.

The protein belongs to the RuvA family. Homotetramer. Forms an RuvA(8)-RuvB(12)-Holliday junction (HJ) complex. HJ DNA is sandwiched between 2 RuvA tetramers; dsDNA enters through RuvA and exits via RuvB. An RuvB hexamer assembles on each DNA strand where it exits the tetramer. Each RuvB hexamer is contacted by two RuvA subunits (via domain III) on 2 adjacent RuvB subunits; this complex drives branch migration. In the full resolvosome a probable DNA-RuvA(4)-RuvB(12)-RuvC(2) complex forms which resolves the HJ.

The protein localises to the cytoplasm. Its function is as follows. The RuvA-RuvB-RuvC complex processes Holliday junction (HJ) DNA during genetic recombination and DNA repair, while the RuvA-RuvB complex plays an important role in the rescue of blocked DNA replication forks via replication fork reversal (RFR). RuvA specifically binds to HJ cruciform DNA, conferring on it an open structure. The RuvB hexamer acts as an ATP-dependent pump, pulling dsDNA into and through the RuvAB complex. HJ branch migration allows RuvC to scan DNA until it finds its consensus sequence, where it cleaves and resolves the cruciform DNA. This chain is Holliday junction branch migration complex subunit RuvA, found in Ehrlichia ruminantium (strain Welgevonden).